The sequence spans 183 residues: Macro domain-containing protein (183 aa).

Positions 1–174 constitute a Macro domain; the sequence is MKKVHLIQAD…IYKNILSNID (174 aa).

Belongs to the MacroD-type family.

The polypeptide is Macro domain-containing protein (Acinetobacter sp. (strain ED45-25)).